The primary structure comprises 828 residues: Zinc finger protein 438 (828 aa).

Disordered regions lie at residues 1–29 (MQNS…KGLQ), 143–173 (KSGC…LYKP), and 193–231 (ALTN…PAKQ). Polar residues-rich tracts occupy residues 16–29 (NIPS…KGLQ) and 150–159 (PAQTQMCPQM). 3 consecutive C2H2-type zinc fingers follow at residues 507–529 (HRCH…MNTH), 535–557 (YSCR…MKLH), and 567–590 (MCCE…KEVH). The interval 680-721 (EGTFPGSKGTQEELVQHASPDWKRHPERGKPEKVHSSSEESH) is disordered. Residues 689–721 (TQEELVQHASPDWKRHPERGKPEKVHSSSEESH) are compositionally biased toward basic and acidic residues. Residues 776–799 (FNCLLCAEMLGRKEDLLHHWKHQH) form a C2H2-type 4 zinc finger.

It belongs to the krueppel C2H2-type zinc-finger protein family. In terms of tissue distribution, ubiquitous.

The protein localises to the nucleus. In terms of biological role, isoform 1 acts as a transcriptional repressor. In Homo sapiens (Human), this protein is Zinc finger protein 438 (ZNF438).